Consider the following 132-residue polypeptide: Small ribosomal subunit protein uS8 (132 aa).

Belongs to the universal ribosomal protein uS8 family. As to quaternary structure, part of the 30S ribosomal subunit. Contacts proteins S5 and S12.

In terms of biological role, one of the primary rRNA binding proteins, it binds directly to 16S rRNA central domain where it helps coordinate assembly of the platform of the 30S subunit. This Nocardia farcinica (strain IFM 10152) protein is Small ribosomal subunit protein uS8.